We begin with the raw amino-acid sequence, 386 residues long: Tryptophan--tRNA ligase (386 aa).

The 'HIGH' region signature appears at 82–90; the sequence is PSGPMHIGH. The 'KMSKS' region signature appears at 253–257; it reads KMSAS.

It belongs to the class-I aminoacyl-tRNA synthetase family.

Its subcellular location is the cytoplasm. It carries out the reaction tRNA(Trp) + L-tryptophan + ATP = L-tryptophyl-tRNA(Trp) + AMP + diphosphate + H(+). The protein is Tryptophan--tRNA ligase of Pyrococcus horikoshii (strain ATCC 700860 / DSM 12428 / JCM 9974 / NBRC 100139 / OT-3).